The sequence spans 319 residues: Acetyl-coenzyme A carboxylase carboxyl transferase subunit alpha (319 aa).

The CoA carboxyltransferase C-terminal domain maps to 39-293; the sequence is RLQKKSNDLT…KAVLEKQLHE (255 aa).

This sequence belongs to the AccA family. In terms of assembly, acetyl-CoA carboxylase is a heterohexamer composed of biotin carboxyl carrier protein (AccB), biotin carboxylase (AccC) and two subunits each of ACCase subunit alpha (AccA) and ACCase subunit beta (AccD).

The protein resides in the cytoplasm. It carries out the reaction N(6)-carboxybiotinyl-L-lysyl-[protein] + acetyl-CoA = N(6)-biotinyl-L-lysyl-[protein] + malonyl-CoA. Its pathway is lipid metabolism; malonyl-CoA biosynthesis; malonyl-CoA from acetyl-CoA: step 1/1. In terms of biological role, component of the acetyl coenzyme A carboxylase (ACC) complex. First, biotin carboxylase catalyzes the carboxylation of biotin on its carrier protein (BCCP) and then the CO(2) group is transferred by the carboxyltransferase to acetyl-CoA to form malonyl-CoA. This chain is Acetyl-coenzyme A carboxylase carboxyl transferase subunit alpha, found in Neisseria meningitidis serogroup B (strain ATCC BAA-335 / MC58).